A 104-amino-acid polypeptide reads, in one-letter code: Putative pterin-4-alpha-carbinolamine dehydratase (104 aa).

The protein belongs to the pterin-4-alpha-carbinolamine dehydratase family.

The enzyme catalyses (4aS,6R)-4a-hydroxy-L-erythro-5,6,7,8-tetrahydrobiopterin = (6R)-L-erythro-6,7-dihydrobiopterin + H2O. This chain is Putative pterin-4-alpha-carbinolamine dehydratase (pcbD), found in Rhizobium meliloti (strain 1021) (Ensifer meliloti).